Consider the following 393-residue polypeptide: Lipid-A-disaccharide synthase (393 aa).

This sequence belongs to the LpxB family.

The enzyme catalyses a lipid X + a UDP-2-N,3-O-bis[(3R)-3-hydroxyacyl]-alpha-D-glucosamine = a lipid A disaccharide + UDP + H(+). The protein operates within bacterial outer membrane biogenesis; LPS lipid A biosynthesis. Its function is as follows. Condensation of UDP-2,3-diacylglucosamine and 2,3-diacylglucosamine-1-phosphate to form lipid A disaccharide, a precursor of lipid A, a phosphorylated glycolipid that anchors the lipopolysaccharide to the outer membrane of the cell. In Bordetella pertussis (strain Tohama I / ATCC BAA-589 / NCTC 13251), this protein is Lipid-A-disaccharide synthase.